A 577-amino-acid polypeptide reads, in one-letter code: ATP-dependent zinc metalloprotease FtsH (577 aa).

Residues 1–3 lie on the Cytoplasmic side of the membrane; it reads MKK. Residues 4–24 form a helical membrane-spanning segment; that stretch reads LYWIILIAVVLACSGILMSLH. At 25–98 the chain is on the extracellular side; the sequence is LSVTKEEMTY…IKVDNSDSYS (74 aa). Residues 99 to 119 traverse the membrane as a helical segment; that stretch reads ATKVIQIILIITVGTGVFLFI. Over 120 to 577 the chain is Cytoplasmic; sequence RTSGGKDKPL…IDRICLKEAV (458 aa). 186–193 is an ATP binding site; that stretch reads GPPGTGKT. Position 409 (His409) interacts with Zn(2+). The active site involves Glu410. Zn(2+) is bound by residues His413 and Asp487.

This sequence in the central section; belongs to the AAA ATPase family. In the C-terminal section; belongs to the peptidase M41 family. Homohexamer. Requires Zn(2+) as cofactor.

The protein resides in the cell membrane. In terms of biological role, acts as a processive, ATP-dependent zinc metallopeptidase for both cytoplasmic and membrane proteins. Plays a role in the quality control of integral membrane proteins. This chain is ATP-dependent zinc metalloprotease FtsH, found in Lachnoclostridium phytofermentans (strain ATCC 700394 / DSM 18823 / ISDg) (Clostridium phytofermentans).